The primary structure comprises 470 residues: Uronate isomerase (470 aa).

It belongs to the metallo-dependent hydrolases superfamily. Uronate isomerase family.

The catalysed reaction is D-glucuronate = D-fructuronate. It carries out the reaction aldehydo-D-galacturonate = keto-D-tagaturonate. The protein operates within carbohydrate metabolism; pentose and glucuronate interconversion. The polypeptide is Uronate isomerase (Salmonella typhi).